A 314-amino-acid polypeptide reads, in one-letter code: tRNA pseudouridine synthase B (314 aa).

Asp-41 serves as the catalytic Nucleophile.

It belongs to the pseudouridine synthase TruB family. Type 1 subfamily.

The catalysed reaction is uridine(55) in tRNA = pseudouridine(55) in tRNA. Its function is as follows. Responsible for synthesis of pseudouridine from uracil-55 in the psi GC loop of transfer RNAs. The chain is tRNA pseudouridine synthase B from Prochlorococcus marinus (strain NATL1A).